The chain runs to 1183 residues: MYLKAVEINGFKSFGDKVYIDFNRGITSIVGPNGSGKSNILDAVLWVLGEQSYKNIRAKESQDVIFSGGKEKKPATKAEVSLIIDNADRYLDLDNDTVKITRRIHISGENEYLINDTKSRLKEIGTLFLDTGIGKTAYSVIGQGKVERIINSSPKEIKSIIEEAAGIKKLQANRIEAQKNLANIEINLDKVEFILNETRENKNKIEKQAELAQKYIDLRDEKSSLAKGIYITELEQKEKNLSENENIKEKYQTECFELQEKLNKTLERLNTIDLEKEEVKKEKLLIDSRNKELRNIISEKEKEKAVTSERLDNVKKEKLVKEEYILHLDNKIEKKLEEVTESKNKKDEISKNIVEMAAANKEFENKIFNLENIKVEKFDLIENRAKKVRDLELEKQLASNEIENNEKKLKSSQDEVENFKQELEEANKKLLANNKEKDLVHSQLEARKEELTKTEERNEFLVNQLSEISKSINKLSQDIREFEYQEKTSSGKLEALVRMDENNEGFFKGVKEVLNSGISGIDGVLISLINFDEKYEKAVEAAIPGNLQDIIVEDKEVAKKCIAFLTEKKLGRTSFLALDTIKPNRREFKANINGVLGLTADLITADKKYQKVIDFIFGGLLIVENIDIATDILNKNLFSGNIVTLTGELVSSRGRITGGENQKSTINQIFERKKEIKTLEEKVTDLKSKITEGSKKREDLSIKLENYENEVDKIDSLEDSIRKDIDLLKKDFESLSEKSEKLSKDIRSISFNIEDAEKYKTSYQDRINSSFSTIEETEKHIASLKKDIEADENLLKQTISEIDSLNKQFSDTRILFLNNQSTIEQLEKDIHSKEIENVELQEEKEKNSKIVIELSHNIEELETLEEELQSQIEEHTKIYNSENRDIETLNEREQNLSNEERELSKDKSKLETDSLHANDRFEKIVEVIEKIKVDILNINEKLNELVEITAQVIEVEKLKSSKDRLRSLENKINNFGDVNLLAINEFKELKERYDYLARERDDVVKSRKQVMDLIQEIDERIHEDFHTTYQNINENFNKMCDETIRNTEGRLNIINPEDFENCGIEIFVKFKNKKKQPLSLLSGGEKSMVAIAFIMAIFMYKPSPFTFLDEIEAALDEKNTKNLLGKLRDFTDKSQFILITHNKETMKESDSIFGVTMNKEIGISKIVSPDKITKILSENKENN.

32 to 39 (PNGSGKSN) provides a ligand contact to ATP. Residues 162–483 (EEAAGIKKLQ…KLSQDIREFE (322 aa)) are a coiled coil. Residues 519-632 (SGIDGVLISL…VENIDIATDI (114 aa)) form the SMC hinge domain. The stretch at 666 to 1019 (INQIFERKKE…VMDLIQEIDE (354 aa)) forms a coiled coil.

It belongs to the SMC family. Homodimer.

The protein localises to the cytoplasm. Required for chromosome condensation and partitioning. In Fusobacterium nucleatum subsp. nucleatum (strain ATCC 25586 / DSM 15643 / BCRC 10681 / CIP 101130 / JCM 8532 / KCTC 2640 / LMG 13131 / VPI 4355), this protein is Chromosome partition protein Smc.